The chain runs to 363 residues: MHASIFAKLEQLSMRLEEVDVMLSNPKVASDVKKFTKLSIERAQLTPVNQQFQAYLSHHRNLEDAKLMLLEDDMDIKAMAKEEMLDVKKKLDHLYLELKKSLLPKDPNDSRNIIIEIRAGTGGNEASIFSSNLFKMYSRYTEKKKWQIEVISSSLGEHGGFKEIIARISGVGVYSKLKFESGAHRVQRVPETESQGRVHTSACTIAIMPEVENIEEVNINMSDVRVDTFRASGAGGQHVNKTNSAVRITHIPTGTVAECQDGRSQHKNKAQALLVLASRIFDLQQQEQHKEQASTRKELIGSGDRSQRIRTYNYPQGRITDHRINLTLYKLSEIMEGNLNAIIEPLIVEQQTSQLTELNDVLS.

An N5-methylglutamine modification is found at glutamine 237. The segment covering glutamate 287–leucine 299 has biased composition (basic and acidic residues). The segment at glutamate 287–serine 306 is disordered.

Belongs to the prokaryotic/mitochondrial release factor family. In terms of processing, methylated by PrmC. Methylation increases the termination efficiency of RF1.

The protein localises to the cytoplasm. Functionally, peptide chain release factor 1 directs the termination of translation in response to the peptide chain termination codons UAG and UAA. This Ruthia magnifica subsp. Calyptogena magnifica protein is Peptide chain release factor 1.